The following is a 268-amino-acid chain: Tropinone reductase homolog (268 aa).

21 to 45 (LVTGGTRGIGYAIVEELANFGAEVY) serves as a coordination point for NADP(+). A substrate-binding site is contributed by Ser-154. Residue Tyr-167 is the Proton acceptor of the active site.

Belongs to the short-chain dehydrogenases/reductases (SDR) family.

This is Tropinone reductase homolog from Datura stramonium (Jimsonweed).